The primary structure comprises 241 residues: Enterotoxin type H (241 aa).

The signal sequence occupies residues 1 to 24 (MINKIKILFSFLALLLSFTSYAKA). A disulfide bridge connects residues cysteine 106 and cysteine 116. Residues aspartate 191, histidine 230, and aspartate 232 each coordinate Zn(2+).

Belongs to the staphylococcal/streptococcal toxin family. As to quaternary structure, interacts with host MHC class II molecules composed of alpha/HLA-DRA and beta/HLA-DRB1 chains. Interacts with host TCR alpha-chain TRAV27. It depends on Zn(2+) as a cofactor.

It is found in the secreted. In terms of biological role, staphylococcal enterotoxin that activates the host immune system by binding as unprocessed molecules to major histocompatibility (MHC) complex class II and T-cell receptor (TCR) molecules via their alpha domain, in particular TRAV27. In turn, this ternary complex activates a large number of T-lymphocytes initiating a systemic release of pro-inflammatory cytokines. Also causes the intoxication staphylococcal food poisoning syndrome. The illness characterized by high fever, hypotension, diarrhea, shock, and in some cases death. This is Enterotoxin type H (entH) from Staphylococcus aureus.